The primary structure comprises 101 residues: Small ribosomal subunit protein uS14 (101 aa).

It belongs to the universal ribosomal protein uS14 family. In terms of assembly, part of the 30S ribosomal subunit. Contacts proteins S3 and S10.

Functionally, binds 16S rRNA, required for the assembly of 30S particles and may also be responsible for determining the conformation of the 16S rRNA at the A site. The protein is Small ribosomal subunit protein uS14 of Haemophilus influenzae (strain PittGG).